Reading from the N-terminus, the 213-residue chain is MEYEDLELITIWPSPTKNKLCQFIKQNLSKEHVVTQLFFIDATSSFPLSQFQKLVPPTLPENVRIYENIRINTCLDLEELSAITVKLLQILSMNKINAQRGTEDAVTEPLKIILYINGLEVMFRNSQFKSSPQRSHELLRDTLLKLRVMGNDENENASIRTLLEFPKEQLLDYYLKKNNNTRTSSVRSKRRRIKNGDSLAEYIWKYYADSLFE.

Belongs to the CSM2 family. As to quaternary structure, component of the SHU complex composed of at least CSM2, PSY3, SHU1 and SHU2.

It localises to the cytoplasm. It is found in the nucleus. Its function is as follows. Involved in chromosome segregation during meiosis. Promotes efficient recombinational repair and functions in the protection of the genome from spontaneous and induced DNA damage like mutations and gross chromosomal rearrangements (GCRs). In Saccharomyces cerevisiae (strain ATCC 204508 / S288c) (Baker's yeast), this protein is Chromosome segregation in meiosis protein 2 (CSM2).